The primary structure comprises 104 residues: Large ribosomal subunit protein uL24 (104 aa).

The protein belongs to the universal ribosomal protein uL24 family. In terms of assembly, part of the 50S ribosomal subunit.

Functionally, one of two assembly initiator proteins, it binds directly to the 5'-end of the 23S rRNA, where it nucleates assembly of the 50S subunit. One of the proteins that surrounds the polypeptide exit tunnel on the outside of the subunit. This is Large ribosomal subunit protein uL24 from Psychromonas ingrahamii (strain DSM 17664 / CCUG 51855 / 37).